The sequence spans 213 residues: Orotidine 5'-phosphate decarboxylase (213 aa).

Substrate is bound by residues Asp-11, Lys-33, 61–70 (DLKLADIPNT), Ser-113, 166–176 (PGVGAQGGKAS), Gly-189, and Arg-190. Lys-63 serves as the catalytic Proton donor.

The protein belongs to the OMP decarboxylase family. Type 1 subfamily. As to quaternary structure, homodimer.

It catalyses the reaction orotidine 5'-phosphate + H(+) = UMP + CO2. Its pathway is pyrimidine metabolism; UMP biosynthesis via de novo pathway; UMP from orotate: step 2/2. In terms of biological role, catalyzes the decarboxylation of orotidine 5'-monophosphate (OMP) to uridine 5'-monophosphate (UMP). This is Orotidine 5'-phosphate decarboxylase from Thermococcus kodakarensis (strain ATCC BAA-918 / JCM 12380 / KOD1) (Pyrococcus kodakaraensis (strain KOD1)).